The following is a 356-amino-acid chain: DNA polymerase IV (356 aa).

A UmuC domain is found at 6-187 (IIHIDMDYFF…LDIGDFPGVG (182 aa)). D10 and D105 together coordinate Mg(2+). Residue E106 is part of the active site.

It belongs to the DNA polymerase type-Y family. Monomer. Mg(2+) serves as cofactor.

It is found in the cytoplasm. The enzyme catalyses DNA(n) + a 2'-deoxyribonucleoside 5'-triphosphate = DNA(n+1) + diphosphate. In terms of biological role, poorly processive, error-prone DNA polymerase involved in untargeted mutagenesis. Copies undamaged DNA at stalled replication forks, which arise in vivo from mismatched or misaligned primer ends. These misaligned primers can be extended by PolIV. Exhibits no 3'-5' exonuclease (proofreading) activity. May be involved in translesional synthesis, in conjunction with the beta clamp from PolIII. The sequence is that of DNA polymerase IV from Staphylococcus epidermidis (strain ATCC 12228 / FDA PCI 1200).